We begin with the raw amino-acid sequence, 262 residues long: Acyl-[acyl-carrier-protein]--UDP-N-acetylglucosamine O-acyltransferase (262 aa).

The protein belongs to the transferase hexapeptide repeat family. LpxA subfamily. Homotrimer.

Its subcellular location is the cytoplasm. The enzyme catalyses a (3R)-hydroxyacyl-[ACP] + UDP-N-acetyl-alpha-D-glucosamine = a UDP-3-O-[(3R)-3-hydroxyacyl]-N-acetyl-alpha-D-glucosamine + holo-[ACP]. The protein operates within glycolipid biosynthesis; lipid IV(A) biosynthesis; lipid IV(A) from (3R)-3-hydroxytetradecanoyl-[acyl-carrier-protein] and UDP-N-acetyl-alpha-D-glucosamine: step 1/6. In terms of biological role, involved in the biosynthesis of lipid A, a phosphorylated glycolipid that anchors the lipopolysaccharide to the outer membrane of the cell. This chain is Acyl-[acyl-carrier-protein]--UDP-N-acetylglucosamine O-acyltransferase, found in Burkholderia lata (strain ATCC 17760 / DSM 23089 / LMG 22485 / NCIMB 9086 / R18194 / 383).